Reading from the N-terminus, the 315-residue chain is Protein SHORT INTERNODES 1 (315 aa).

The segment covering 1–10 has biased composition (gly residues); it reads MAGFPLGGGS. Disordered stretches follow at residues 1 to 24 and 64 to 92; these read MAGFPLGGGSHSRDNPAPPVPPVH and PPAPSLAGASSSSSSRGMRSSGGGGGGGG. Residues 70–82 are compositionally biased toward low complexity; the sequence is AGASSSSSSRGMR. The span at 83–92 shows a compositional bias: gly residues; the sequence is SSGGGGGGGG. The Zn(2+) site is built by Cys97, Cys100, Cys108, Cys113, Cys117, and Cys124. The segment at residues 97–124 is a DNA-binding region (zn(2)-C6 fungal-type; degenerate); that stretch reads CQDCGNQAKKDCTHMRCRTCCKSRGFAC. Composition is skewed to low complexity over residues 143–156 and 172–182; these read QQLAALAASAAATA and RPSATTPTTSS. The segment at 143-186 is disordered; sequence QQLAALAASAAATAGGAGPSRDPTKRPRARPSATTPTTSSGDQQ. The Required for homo- and heterodimerization motif lies at 227 to 230; sequence IGGH.

It belongs to the SHI protein family. In terms of assembly, forms homodimers (via C-terminus). Interacts with SPL14/IPA1 (via C-terminus). As to expression, predominantly expressed in axillary buds and young panicles.

Its subcellular location is the nucleus. Its function is as follows. Regulates tillering and panicle branching by modulating SPL14/IPA1 transcriptional activity on the downstream TB1 and DEP1 target genes. Binds directly to the 5'-T/GCTCTAC-3' DNA motif found in the promoter regions of both TB1 and DEP1. Represses the DNA binding activity of SPL14/IPA1 toward the promoters of both TB1 and DEP1. Exhibits weak transcriptional activation activity in yeast cells. In Oryza sativa subsp. japonica (Rice), this protein is Protein SHORT INTERNODES 1.